We begin with the raw amino-acid sequence, 468 residues long: ATP synthase subunit beta (468 aa).

153-160 (GGAGVGKT) contacts ATP.

The protein belongs to the ATPase alpha/beta chains family. In terms of assembly, F-type ATPases have 2 components, CF(1) - the catalytic core - and CF(0) - the membrane proton channel. CF(1) has five subunits: alpha(3), beta(3), gamma(1), delta(1), epsilon(1). CF(0) has three main subunits: a(1), b(2) and c(9-12). The alpha and beta chains form an alternating ring which encloses part of the gamma chain. CF(1) is attached to CF(0) by a central stalk formed by the gamma and epsilon chains, while a peripheral stalk is formed by the delta and b chains.

The protein resides in the cell inner membrane. The catalysed reaction is ATP + H2O + 4 H(+)(in) = ADP + phosphate + 5 H(+)(out). Its function is as follows. Produces ATP from ADP in the presence of a proton gradient across the membrane. The catalytic sites are hosted primarily by the beta subunits. This chain is ATP synthase subunit beta, found in Nautilia profundicola (strain ATCC BAA-1463 / DSM 18972 / AmH).